The sequence spans 181 residues: Isopentenyl-diphosphate Delta-isomerase (181 aa).

His-24 and His-30 together coordinate Mn(2+). The Nudix hydrolase domain occupies 28-168; that stretch reads LLHLAFSVLL…PDTFSVWFPT (141 aa). Cys-68 is a catalytic residue. His-70 contributes to the Mn(2+) binding site. Glu-88 is a binding site for Mg(2+). The Mn(2+) site is built by Glu-117 and Glu-119. Residue Glu-119 is part of the active site.

Belongs to the IPP isomerase type 1 family. Mg(2+) serves as cofactor. Mn(2+) is required as a cofactor.

The protein localises to the cytoplasm. The catalysed reaction is isopentenyl diphosphate = dimethylallyl diphosphate. Its pathway is isoprenoid biosynthesis; dimethylallyl diphosphate biosynthesis; dimethylallyl diphosphate from isopentenyl diphosphate: step 1/1. In terms of biological role, catalyzes the 1,3-allylic rearrangement of the homoallylic substrate isopentenyl (IPP) to its highly electrophilic allylic isomer, dimethylallyl diphosphate (DMAPP). This chain is Isopentenyl-diphosphate Delta-isomerase, found in Aliivibrio fischeri (strain MJ11) (Vibrio fischeri).